Reading from the N-terminus, the 376-residue chain is CC-adding tRNA nucleotidyltransferase (376 aa).

Position 26-29 (26-29 (GAVR)) interacts with CTP. The Mg(2+) site is built by Asp39 and Asp41. CTP is bound by residues 94–95 (RD), Asn99, 136–145 (DPLRMLRAAR), and Arg176.

It belongs to the tRNA nucleotidyltransferase/poly(A) polymerase family. Mg(2+) serves as cofactor.

The catalysed reaction is a tRNA precursor + 2 CTP = a tRNA with a 3' CC end + 2 diphosphate. Functionally, tRNA nucleotidyltransferase involved in the synthesis of the tRNA CCA terminus. Adds the two cytidine residues to tRNA. This Shouchella clausii (strain KSM-K16) (Alkalihalobacillus clausii) protein is CC-adding tRNA nucleotidyltransferase.